A 60-amino-acid chain; its full sequence is Toxin 5 (60 aa).

4 disulfide bridges follow: cysteine 3–cysteine 22, cysteine 17–cysteine 39, cysteine 41–cysteine 52, and cysteine 53–cysteine 58.

Belongs to the three-finger toxin family. Short-chain subfamily. Type I alpha-neurotoxin sub-subfamily. As to expression, expressed by the venom gland.

The protein resides in the secreted. Its function is as follows. Binds to muscle nicotinic acetylcholine receptor (nAChR) and inhibit acetylcholine from binding to the receptor, thereby impairing neuromuscular transmission. This chain is Toxin 5, found in Hydrophis schistosus (Beaked sea snake).